The chain runs to 321 residues: L-carnitine dehydrogenase (321 aa).

An NAD(+)-binding site is contributed by 7-12; sequence GTGVIG.

It belongs to the 3-hydroxyacyl-CoA dehydrogenase family. L-carnitine dehydrogenase subfamily. Homodimer.

It is found in the cytoplasm. The enzyme catalyses carnitine + NAD(+) = 3-dehydrocarnitine + NADH + H(+). The protein operates within amine and polyamine metabolism; carnitine metabolism. Its function is as follows. Catalyzes the NAD(+)-dependent oxidation of L-carnitine to 3-dehydrocarnitine. In Staphylococcus epidermidis (strain ATCC 12228 / FDA PCI 1200), this protein is L-carnitine dehydrogenase.